Reading from the N-terminus, the 49-residue chain is Metallothionein (49 aa).

Residues 1 to 16 (SCAGSCKCKNCRCRSC) form a beta region. Positions 2, 6, 8, 11, 13, 16, 20, 21, 23, 24, 28, 31, 35, 37, 45, 47, and 48 each coordinate a divalent metal cation. The tract at residues 17-49 (RKSCCSCCPAGCNNCAKGCVCKEPASSKCSCCH) is alpha.

This sequence belongs to the metallothionein superfamily. Type 1 family.

In terms of biological role, metallothioneins have a high content of cysteine residues that bind various heavy metals. This chain is Metallothionein, found in Phasianus colchicus colchicus (Black-necked pheasant).